Here is a 609-residue protein sequence, read N- to C-terminus: Dihydroxy-acid dehydratase 1 (609 aa).

Residue Asp81 coordinates Mg(2+). Position 122 (Cys122) interacts with [2Fe-2S] cluster. Asp123 and Lys124 together coordinate Mg(2+). Lys124 carries the N6-carboxylysine modification. Cys195 is a [2Fe-2S] cluster binding site. Glu491 serves as a coordination point for Mg(2+). Ser517 acts as the Proton acceptor in catalysis.

It belongs to the IlvD/Edd family. Homodimer. [2Fe-2S] cluster is required as a cofactor. Mg(2+) serves as cofactor.

It catalyses the reaction (2R)-2,3-dihydroxy-3-methylbutanoate = 3-methyl-2-oxobutanoate + H2O. It carries out the reaction (2R,3R)-2,3-dihydroxy-3-methylpentanoate = (S)-3-methyl-2-oxopentanoate + H2O. It functions in the pathway amino-acid biosynthesis; L-isoleucine biosynthesis; L-isoleucine from 2-oxobutanoate: step 3/4. The protein operates within amino-acid biosynthesis; L-valine biosynthesis; L-valine from pyruvate: step 3/4. Functions in the biosynthesis of branched-chain amino acids. Catalyzes the dehydration of (2R,3R)-2,3-dihydroxy-3-methylpentanoate (2,3-dihydroxy-3-methylvalerate) into 2-oxo-3-methylpentanoate (2-oxo-3-methylvalerate) and of (2R)-2,3-dihydroxy-3-methylbutanoate (2,3-dihydroxyisovalerate) into 2-oxo-3-methylbutanoate (2-oxoisovalerate), the penultimate precursor to L-isoleucine and L-valine, respectively. The polypeptide is Dihydroxy-acid dehydratase 1 (Acinetobacter baylyi (strain ATCC 33305 / BD413 / ADP1)).